The primary structure comprises 129 residues: Flagellar assembly factor FliW (129 aa).

It belongs to the FliW family. Interacts with flagellins FlaA and FlaB but not with FlaC; recognizes glycosylated and non-glycosylated FlaA equally. Interacts with CsrA. May form a 3-way complex of flagellin, FliS and FliW simultaneously in which FliS and FliW do not directly interact.

It localises to the cytoplasm. In terms of biological role, acts as an anti-CsrA protein, binds CsrA and prevents it from repressing translation of its target genes, one of which is flagellin. Binds to flagellin and participates in the assembly of the flagellum. Overexpression leads to increased levels of FlaA and FlaB, but levels of FlaC remain stable. Involved in post-transcriptional regulation of flagellin biosynthesis. The polypeptide is Flagellar assembly factor FliW (Campylobacter jejuni subsp. jejuni serotype O:6 (strain 81116 / NCTC 11828)).